Here is a 158-residue protein sequence, read N- to C-terminus: C-type lectin galactose-binding isoform (158 aa).

An N-terminal signal peptide occupies residues 1 to 23 (MGRFLLVTLSLLVVAFSLNGANS). Cystine bridges form between Cys26–Cys37, Cys54–Cys154, and Cys129–Cys146. The region spanning 33-155 (RNGFCYKVFN…CTALRPFLCQ (123 aa)) is the C-type lectin domain. Ca(2+) contacts are provided by Gln119, Asp121, and Glu127. The short motif at 119 to 121 (QPD) is the Galactose-binding element. N-linked (GlcNAc...) asparagine glycosylation is present at Asn134. Ca(2+) is bound by residues Asn142 and Asp143.

Belongs to the true venom lectin family. As to quaternary structure, homodimer; disulfide-linked. In terms of tissue distribution, expressed by the venom gland.

The protein localises to the secreted. Functionally, galactose-binding lectin that binds to and agglutinates erythrocytes in a calcium-dependent manner. The sequence is that of C-type lectin galactose-binding isoform from Pseudechis porphyriacus (Red-bellied black snake).